Here is a 548-residue protein sequence, read N- to C-terminus: Glutamate--tRNA ligase (548 aa).

The short motif at Pro-102–His-112 is the 'HIGH' region element.

Belongs to the class-I aminoacyl-tRNA synthetase family. Glutamate--tRNA ligase type 2 subfamily.

It localises to the cytoplasm. The enzyme catalyses tRNA(Glu) + L-glutamate + ATP = L-glutamyl-tRNA(Glu) + AMP + diphosphate. Its function is as follows. Catalyzes the attachment of glutamate to tRNA(Glu) in a two-step reaction: glutamate is first activated by ATP to form Glu-AMP and then transferred to the acceptor end of tRNA(Glu). The sequence is that of Glutamate--tRNA ligase from Thermoplasma volcanium (strain ATCC 51530 / DSM 4299 / JCM 9571 / NBRC 15438 / GSS1).